We begin with the raw amino-acid sequence, 415 residues long: Hydroxysteroid dehydrogenase-like protein 2 (415 aa).

NADP(+) is bound by residues 17-23 (GASRGIG), K42, and D74. Catalysis depends on Y168, which acts as the Proton acceptor. Residue K172 coordinates NADP(+). Residues 304–412 (AGPVSEMFNT…KLEKMMAMMK (109 aa)) enclose the SCP2 domain.

It belongs to the short-chain dehydrogenases/reductases (SDR) family.

It localises to the peroxisome. The protein resides in the mitochondrion. In terms of biological role, has apparently no steroid dehydrogenase activity. Might act as a metabolic regulator that affects systemic adaptation to nutritional cues. The chain is Hydroxysteroid dehydrogenase-like protein 2 (hsdl2) from Danio rerio (Zebrafish).